We begin with the raw amino-acid sequence, 100 residues long: Osteocalcin (100 aa).

The first 23 residues, 1–23 (MRTPMLLALLALATLCLAGRADA), serve as a signal peptide directing secretion. Positions 24-51 (KPGDAESGKGAAFVSKQEGSEVVKRLRR) are excised as a propeptide. In terms of domain architecture, Gla spans 52–98 (YLDHWLGAPAPYPDPLEPKREVCELNPDCDELADHIGFQEAYRRFYG). The residue at position 60 (Pro60) is a 4-hydroxyproline. Residues Glu68, Glu72, Glu75, and Asp81 each contribute to the Ca(2+) site. Glu68, Glu72, and Glu75 each carry 4-carboxyglutamate. Cysteines 74 and 80 form a disulfide.

The protein belongs to the osteocalcin/matrix Gla protein family. In terms of processing, gamma-carboxyglutamate residues are formed by vitamin K dependent carboxylation by GGCX. These residues are essential for the binding of calcium. Decarboxylation promotes the hormone activity.

The protein resides in the secreted. In terms of biological role, the carboxylated form is one of the main organic components of the bone matrix, which constitutes 1-2% of the total bone protein. It acts as a negative regulator of bone formation and is required to limit bone formation without impairing bone resorption or mineralization. The carboxylated form binds strongly to apatite and calcium. The uncarboxylated form acts as a hormone secreted by osteoblasts, which regulates different cellular processes, such as energy metabolism, male fertility and brain development. Regulates of energy metabolism by acting as a hormone favoring pancreatic beta-cell proliferation, insulin secretion and sensitivity and energy expenditure. Uncarboxylated osteocalcin hormone also promotes testosterone production in the testes: acts as a ligand for G protein-coupled receptor GPRC6A at the surface of Leydig cells, initiating a signaling response that promotes the expression of enzymes required for testosterone synthesis in a CREB-dependent manner. Also acts as a regulator of brain development: osteocalcin hormone crosses the blood-brain barrier and acts as a ligand for GPR158 on neurons, initiating a signaling response that prevents neuronal apoptosis in the hippocampus, favors the synthesis of all monoamine neurotransmitters and inhibits that of gamma-aminobutyric acid (GABA). Osteocalcin also crosses the placenta during pregnancy and maternal osteocalcin is required for fetal brain development. This chain is Osteocalcin (BGLAP), found in Bos taurus (Bovine).